The chain runs to 243 residues: NAD-dependent protein deacetylase (243 aa).

The 243-residue stretch at 1–243 (MKHDLETLKH…VSVVKSLMTE (243 aa)) folds into the Deacetylase sirtuin-type domain. Positions 24, 35, 36, 105, 107, 108, and 123 each coordinate NAD(+). Phe35 contributes to the nicotinamide binding site. The nicotinamide site is built by Ile107 and Asp108. His123 functions as the Proton acceptor in the catalytic mechanism. Cys131, Cys134, Cys151, and Cys154 together coordinate Zn(2+). Residues Ser192, Ser193, Asn215, and Asp232 each contribute to the NAD(+) site.

This sequence belongs to the sirtuin family. Class U subfamily. Zn(2+) is required as a cofactor.

Its subcellular location is the cytoplasm. The enzyme catalyses N(6)-acetyl-L-lysyl-[protein] + NAD(+) + H2O = 2''-O-acetyl-ADP-D-ribose + nicotinamide + L-lysyl-[protein]. Functionally, NAD-dependent protein deacetylase which modulates the activities of several enzymes which are inactive in their acetylated form. The sequence is that of NAD-dependent protein deacetylase from Staphylococcus aureus (strain NCTC 8325 / PS 47).